We begin with the raw amino-acid sequence, 497 residues long: Cytochrome P450 71A12 (497 aa).

The chain crosses the membrane as a helical span at residues Ile-4–Leu-24. Residue Cys-439 participates in heme binding.

The protein belongs to the cytochrome P450 family. The cofactor is heme.

The protein resides in the membrane. Functionally, converts indole-3-acetaldoxime to indole cyanohydrin. Involved in the biosynthetic pathway to 4-hydroxyindole-3-carbonyl nitrile (4-OH-ICN), a cyanogenic metabolite required for inducible pathogen defense. This is Cytochrome P450 71A12 (CYP71A12) from Arabidopsis thaliana (Mouse-ear cress).